We begin with the raw amino-acid sequence, 843 residues long: Protein P (843 aa).

The interval 1–177 (MPLSYQHFRK…FCGSPYSWEQ (177 aa)) is terminal protein domain (TP). The segment at 178–346 (ELQHGRLFFK…YCLSHIVNLL (169 aa)) is spacer. The segment at 248–272 (HPTTRQSFGVEPSGSGHIDNSASNS) is disordered. Residues 347-690 (EDWGPCTENG…YLNLYPVARQ (344 aa)) form a polymerase/reverse transcriptase domain (RT) region. Residues 357 to 600 (EHNIRIPRTP…YSLNFMGYVI (244 aa)) form the Reverse transcriptase domain. The Mg(2+) site is built by aspartate 429, aspartate 551, and aspartate 552.

It belongs to the hepadnaviridae P protein family.

The catalysed reaction is DNA(n) + a 2'-deoxyribonucleoside 5'-triphosphate = DNA(n+1) + diphosphate. The enzyme catalyses Endonucleolytic cleavage to 5'-phosphomonoester.. Its activity is regulated as follows. Activated by host HSP70 and HSP40 in vitro to be able to bind the epsilon loop of the pgRNA. Because deletion of the RNase H region renders the protein partly chaperone-independent, the chaperones may be needed indirectly to relieve occlusion of the RNA-binding site by this domain. Inhibited by several reverse-transcriptase inhibitors: Lamivudine, Adefovir and Entecavir. Multifunctional enzyme that converts the viral RNA genome into dsDNA in viral cytoplasmic capsids. This enzyme displays a DNA polymerase activity that can copy either DNA or RNA templates, and a ribonuclease H (RNase H) activity that cleaves the RNA strand of RNA-DNA heteroduplexes in a partially processive 3'- to 5'-endonucleasic mode. Neo-synthesized pregenomic RNA (pgRNA) are encapsidated together with the P protein, and reverse-transcribed inside the nucleocapsid. Initiation of reverse-transcription occurs first by binding the epsilon loop on the pgRNA genome, and is initiated by protein priming, thereby the 5'-end of (-)DNA is covalently linked to P protein. Partial (+)DNA is synthesized from the (-)DNA template and generates the relaxed circular DNA (RC-DNA) genome. After budding and infection, the RC-DNA migrates in the nucleus, and is converted into a plasmid-like covalently closed circular DNA (cccDNA). The activity of P protein does not seem to be necessary for cccDNA generation, and is presumably released from (+)DNA by host nuclear DNA repair machinery. This chain is Protein P, found in Homo sapiens (Human).